We begin with the raw amino-acid sequence, 126 residues long: Holo-[acyl-carrier-protein] synthase (126 aa).

Mg(2+) is bound by residues Asp-9 and Glu-58.

The protein belongs to the P-Pant transferase superfamily. AcpS family. Homodimer. Mg(2+) is required as a cofactor.

It is found in the cytoplasm. The catalysed reaction is apo-[ACP] + CoA = holo-[ACP] + adenosine 3',5'-bisphosphate + H(+). Its function is as follows. Transfers the 4'-phosphopantetheine moiety from coenzyme A to the 'Ser-36' of acyl-carrier-protein. The sequence is that of Holo-[acyl-carrier-protein] synthase from Escherichia coli O157:H7.